A 97-amino-acid chain; its full sequence is Putative pterin-4-alpha-carbinolamine dehydratase (97 aa).

This sequence belongs to the pterin-4-alpha-carbinolamine dehydratase family.

It catalyses the reaction (4aS,6R)-4a-hydroxy-L-erythro-5,6,7,8-tetrahydrobiopterin = (6R)-L-erythro-6,7-dihydrobiopterin + H2O. In Christiangramia forsetii (strain DSM 17595 / CGMCC 1.15422 / KT0803) (Gramella forsetii), this protein is Putative pterin-4-alpha-carbinolamine dehydratase.